The primary structure comprises 375 residues: Ribosomal RNA large subunit methyltransferase F (375 aa).

Disordered stretches follow at residues 1 to 39 (MKNN…AAVK) and 262 to 281 (NQRK…GKPT). Basic residues predominate over residues 27–38 (AKPKRVKKKAAV).

Belongs to the methyltransferase superfamily. METTL16/RlmF family.

The protein resides in the cytoplasm. It carries out the reaction adenosine(1618) in 23S rRNA + S-adenosyl-L-methionine = N(6)-methyladenosine(1618) in 23S rRNA + S-adenosyl-L-homocysteine + H(+). Functionally, specifically methylates the adenine in position 1618 of 23S rRNA. This chain is Ribosomal RNA large subunit methyltransferase F, found in Vibrio parahaemolyticus serotype O3:K6 (strain RIMD 2210633).